Consider the following 636-residue polypeptide: Threonine--tRNA ligase (636 aa).

Residues 1–63 (MNEINVTLPD…ADGARVEIVT (63 aa)) form the TGS domain. A catalytic region spans residues 243–534 (DHRKLGRELD…LIEHFAGNFP (292 aa)). 3 residues coordinate Zn(2+): C335, H386, and H511.

It belongs to the class-II aminoacyl-tRNA synthetase family. In terms of assembly, homodimer. The cofactor is Zn(2+).

It localises to the cytoplasm. The enzyme catalyses tRNA(Thr) + L-threonine + ATP = L-threonyl-tRNA(Thr) + AMP + diphosphate + H(+). Catalyzes the attachment of threonine to tRNA(Thr) in a two-step reaction: L-threonine is first activated by ATP to form Thr-AMP and then transferred to the acceptor end of tRNA(Thr). Also edits incorrectly charged L-seryl-tRNA(Thr). The sequence is that of Threonine--tRNA ligase from Geobacter sp. (strain M21).